The following is a 953-amino-acid chain: Atromentin synthetase invA5 (953 aa).

The interval 37-460 (SRAVSQYPDH…SGRIKDTVIV (424 aa)) is adenylation (A) domain. Positions 592 to 670 (APSTETEKTL…SLAKYVDSLI (79 aa)) constitute a Carrier domain. The tract at residues 597–667 (TEKTLAGIYA…VISSLAKYVD (71 aa)) is thiolation and peptide carrier (T) domain. O-(pantetheine 4'-phosphoryl)serine is present on Ser-629. The segment at 693–795 (PIFMVHPGVG…FTGLINIPPN (103 aa)) is thioesterase (TE) domain.

The protein belongs to the ATP-dependent AMP-binding enzyme family.

It participates in secondary metabolite biosynthesis. Functionally, an L-tyrosine:2-oxoglutarate aminotransferase (probably invD) and atromentin synthetase invA5 catalyze consecutive steps to turn over L-tyrosine into atromentin, which represents the generic precursor molecule for the entire terphenylquinone and pulvinic acid family of pigments, which are widely distributed secondary metabolites in homobasidiomycetes. The first step catalyzed by the aminotransferase converts L-tyrosine in to 4-hydroxyphenylpyruvate (4-HPP). Adenylation of two 4-HPP monomers by the invA5 adenylation (A) domain, covalent tethering of the monomers as a thioester and oxoester onto the invA5 thiolation (T) and thioesterase (TE) domains, respectively, and symmetric C-C-bond formation between two monomers catalyzed by the invA5 TE domain leads to atromentin. The sequence is that of Atromentin synthetase invA5 (invA5) from Paxillus involutus (Naked brimcap).